Here is a 379-residue protein sequence, read N- to C-terminus: Probable tRNA sulfurtransferase (379 aa).

Residues 52–157 (DEFLDKLKFI…RHHAFVFCKI (106 aa)) form the THUMP domain. ATP-binding positions include 175-176 (LL), Arg-257, Gly-279, and Gln-288.

The protein belongs to the ThiI family.

The protein resides in the cytoplasm. The catalysed reaction is [ThiI sulfur-carrier protein]-S-sulfanyl-L-cysteine + a uridine in tRNA + 2 reduced [2Fe-2S]-[ferredoxin] + ATP + H(+) = [ThiI sulfur-carrier protein]-L-cysteine + a 4-thiouridine in tRNA + 2 oxidized [2Fe-2S]-[ferredoxin] + AMP + diphosphate. It catalyses the reaction [ThiS sulfur-carrier protein]-C-terminal Gly-Gly-AMP + S-sulfanyl-L-cysteinyl-[cysteine desulfurase] + AH2 = [ThiS sulfur-carrier protein]-C-terminal-Gly-aminoethanethioate + L-cysteinyl-[cysteine desulfurase] + A + AMP + 2 H(+). The protein operates within cofactor biosynthesis; thiamine diphosphate biosynthesis. Catalyzes the ATP-dependent transfer of a sulfur to tRNA to produce 4-thiouridine in position 8 of tRNAs, which functions as a near-UV photosensor. Also catalyzes the transfer of sulfur to the sulfur carrier protein ThiS, forming ThiS-thiocarboxylate. This is a step in the synthesis of thiazole, in the thiamine biosynthesis pathway. The sulfur is donated as persulfide by IscS. This chain is Probable tRNA sulfurtransferase, found in Mycoplasmopsis pulmonis (strain UAB CTIP) (Mycoplasma pulmonis).